Here is a 122-residue protein sequence, read N- to C-terminus: uncharacterized protein (122 aa).

The 111-residue stretch at 10–120 (VFARILRGEI…AGRRLGPMIT (111 aa)) folds into the HIT domain. Residues 104-108 (HLHIH) carry the Histidine triad motif motif.

This is an uncharacterized protein from Azospirillum brasilense.